We begin with the raw amino-acid sequence, 198 residues long: Recombination protein RecR (198 aa).

The segment at 57 to 72 adopts a C4-type zinc-finger fold; sequence CSTCQTLTDQDPCAIC. One can recognise a Toprim domain in the interval 80–175; it reads RMICVVEGVP…KVTRIAQGVP (96 aa).

It belongs to the RecR family.

Functionally, may play a role in DNA repair. It seems to be involved in an RecBC-independent recombinational process of DNA repair. It may act with RecF and RecO. The polypeptide is Recombination protein RecR (Anaeromyxobacter dehalogenans (strain 2CP-C)).